The primary structure comprises 334 residues: Cathepsin J (334 aa).

An N-terminal signal peptide occupies residues 1-17; sequence MTPAVFLVILCFGVASG. A propeptide spans 18-113 (activation peptide); that stretch reads APARDPNLDA…PSAQKQVSIG (96 aa). Cys138 is an active-site residue. N-linked (GlcNAc...) asparagine glycans are attached at residues Asn217, Asn221, and Asn268. An intrachain disulfide couples Cys269 to Cys322. His276 is a catalytic residue. N-linked (GlcNAc...) asparagine glycosylation occurs at Asn288. Asn300 is an active-site residue.

This sequence belongs to the peptidase C1 family. As to expression, expressed specifically in placenta.

It localises to the lysosome. This is Cathepsin J (Ctsj) from Rattus norvegicus (Rat).